The chain runs to 90 residues: UPF0184 protein (90 aa).

Residues 16-78 are a coiled coil; that stretch reads DETKEEMVEL…QSLETEQNTE (63 aa). The disordered stretch occupies residues 57–90; it reads SQQARQELQAERQSLETEQNTEPSTKSDQEQKKQ. Positions 81–90 are enriched in basic and acidic residues; it reads TKSDQEQKKQ.

This sequence belongs to the UPF0184 (EST00098) family.

This is UPF0184 protein from Branchiostoma floridae (Florida lancelet).